A 131-amino-acid polypeptide reads, in one-letter code: Small ribosomal subunit protein uS8 (131 aa).

Belongs to the universal ribosomal protein uS8 family. In terms of assembly, part of the 30S ribosomal subunit. Contacts proteins S5 and S12.

Its function is as follows. One of the primary rRNA binding proteins, it binds directly to 16S rRNA central domain where it helps coordinate assembly of the platform of the 30S subunit. The chain is Small ribosomal subunit protein uS8 from Methylobacillus flagellatus (strain ATCC 51484 / DSM 6875 / VKM B-1610 / KT).